A 416-amino-acid polypeptide reads, in one-letter code: Lipid II:glycine glycyltransferase (416 aa).

This sequence belongs to the FemABX family.

It is found in the cytoplasm. The catalysed reaction is beta-D-GlcNAc-(1-&gt;4)-Mur2Ac(oyl-L-Ala-D-isoglutaminyl-L-Lys-D-Ala-D-Ala)-di-trans,octa-cis-undecaprenyl diphosphate + glycyl-tRNA(Gly) = beta-D-GlcNAc-(1-&gt;4)-Mur2Ac(oyl-L-Ala-D-isoglutaminyl-L-Lys-(N(6)-Gly)-D-Ala-D-Ala)-di-trans,octa-cis-undecaprenyl diphosphate + tRNA(Gly) + H(+). Functionally, catalyzes the incorporation of amino acid(s) into the interchain peptide bridge of peptidoglycan, using aminoacyl-tRNA as amino acid donor. This chain is Lipid II:glycine glycyltransferase (femX), found in Staphylococcus epidermidis (strain ATCC 35984 / DSM 28319 / BCRC 17069 / CCUG 31568 / BM 3577 / RP62A).